The chain runs to 491 residues: [Pyruvate dehydrogenase (acetyl-transferring)] kinase 2, mitochondrial (491 aa).

In terms of domain architecture, Histidine kinase spans Pro-153–Met-480. Residues Glu-300 to Glu-307, Asp-341, Ser-359 to Lys-360, and Asp-383 to Leu-446 contribute to the ATP site.

Belongs to the PDK/BCKDK protein kinase family. In terms of assembly, interacts with PKP1.

It is found in the mitochondrion matrix. The enzyme catalyses L-seryl-[pyruvate dehydrogenase E1 alpha subunit] + ATP = O-phospho-L-seryl-[pyruvate dehydrogenase E1 alpha subunit] + ADP + H(+). Its function is as follows. Inhibits the mitochondrial pyruvate dehydrogenase complex by phosphorylation of the E1 alpha subunit (PDA1), thus contributing to the regulation of glucose metabolism. The sequence is that of [Pyruvate dehydrogenase (acetyl-transferring)] kinase 2, mitochondrial from Saccharomyces cerevisiae (strain ATCC 204508 / S288c) (Baker's yeast).